Here is a 195-residue protein sequence, read N- to C-terminus: Iron-sulfur flavoprotein AF_1519 (195 aa).

Residues Cys-45, Cys-48, Cys-51, and Cys-57 each contribute to the [4Fe-4S] cluster site.

Belongs to the SsuE family. Isf subfamily. In terms of assembly, homodimer. FMN serves as cofactor. Requires [4Fe-4S] cluster as cofactor.

Redox-active protein probably involved in electron transport. The chain is Iron-sulfur flavoprotein AF_1519 from Archaeoglobus fulgidus (strain ATCC 49558 / DSM 4304 / JCM 9628 / NBRC 100126 / VC-16).